Here is a 481-residue protein sequence, read N- to C-terminus: Glycogen synthase (481 aa).

K16 is an ADP-alpha-D-glucose binding site.

It belongs to the glycosyltransferase 1 family. Bacterial/plant glycogen synthase subfamily.

The catalysed reaction is [(1-&gt;4)-alpha-D-glucosyl](n) + ADP-alpha-D-glucose = [(1-&gt;4)-alpha-D-glucosyl](n+1) + ADP + H(+). Its pathway is glycan biosynthesis; glycogen biosynthesis. Functionally, synthesizes alpha-1,4-glucan chains using ADP-glucose. This Lacticaseibacillus casei (strain BL23) (Lactobacillus casei) protein is Glycogen synthase.